Consider the following 488-residue polypeptide: Facilitated trehalose transporter Tret1-2 homolog (488 aa).

At 1–28 the chain is on the cytoplasmic side; that stretch reads MKILMRADTHVSYSVPAEGPKANFTFSQ. A helical membrane pass occupies residues 29–49; sequence VLAALSVSLCSLVVGFVSAYT. Residues 50–72 lie on the Extracellular side of the membrane; that stretch reads SPALVSMTDRTITSFEVTKDAGS. A helical membrane pass occupies residues 73-93; that stretch reads WVGGIMPLAALAGGITGGPLI. Over 94–105 the chain is Cytoplasmic; that stretch reads EYLGRRTTILAT. The chain crosses the membrane as a helical span at residues 106-126; sequence AVPFIVSSLLIACAVNVIMIL. Topologically, residues 127-129 are extracellular; it reads CGR. Residues 130–150 form a helical membrane-spanning segment; that stretch reads FLTGFCVGIASLSLPVYLGET. The Cytoplasmic segment spans residues 151-160; that stretch reads LQPEVRGTLG. Residues 161-181 form a helical membrane-spanning segment; it reads LLPTALGNIGILVCYVAGSFM. N182 carries an N-linked (GlcNAc...) asparagine glycan. Residues 182 to 184 are Extracellular-facing; that stretch reads NWS. Residues 185–205 form a helical membrane-spanning segment; sequence MLAFLGAALPVPFLILMIIIP. Residues 206 to 268 lie on the Cytoplasmic side of the membrane; the sequence is ETPRWFVNRG…ELFKRINLKP (63 aa). Residues 269 to 289 traverse the membrane as a helical segment; that stretch reads LSISLGLMFFQQFSGINAVIF. Over 290–305 the chain is Extracellular; it reads YTVQIFKDAGSTIDSN. Residues 306-326 form a helical membrane-spanning segment; the sequence is LCTIIVGIVNFFATFMGILLI. Over 327–332 the chain is Cytoplasmic; it reads DRLGRK. Residues 333–353 traverse the membrane as a helical segment; that stretch reads ILLYISDIAMILTLSILGGFF. At 354-372 the chain is on the extracellular side; the sequence is YCKAHGPDVSHLGWLPLTC. A helical transmembrane segment spans residues 373-393; sequence FVIYILGFSLGFGPIPWLMMG. The Cytoplasmic portion of the chain corresponds to 394 to 402; it reads EILPAKIRG. The helical transmembrane segment at 403-423 threads the bilayer; it reads PAASVVTAFNWFCTFVVTKTF. The Extracellular portion of the chain corresponds to 424-433; it reads QDLTVAMGAH. Residues 434-454 form a helical membrane-spanning segment; the sequence is GAFWLFGVVCIVGLFFVIICV. The Cytoplasmic portion of the chain corresponds to 455–488; that stretch reads PETRGKSLEEIERKMMGRVPISAVVNIKPFSFNM.

This sequence belongs to the major facilitator superfamily. Sugar transporter (TC 2.A.1.1) family. Trehalose transporter subfamily.

It is found in the cell membrane. Its function is as follows. Fails to transport trehalose. The chain is Facilitated trehalose transporter Tret1-2 homolog from Drosophila simulans (Fruit fly).